We begin with the raw amino-acid sequence, 499 residues long: Glycerol kinase (499 aa).

T14 provides a ligand contact to ADP. Positions 14, 15, and 16 each coordinate ATP. Position 14 (T14) interacts with sn-glycerol 3-phosphate. R18 is an ADP binding site. Positions 84, 85, 136, and 245 each coordinate sn-glycerol 3-phosphate. Positions 84, 85, 136, 245, and 246 each coordinate glycerol. Positions 267 and 310 each coordinate ADP. Residues T267, G310, Q314, and G411 each coordinate ATP. Residues G411 and N415 each coordinate ADP.

The protein belongs to the FGGY kinase family.

The catalysed reaction is glycerol + ATP = sn-glycerol 3-phosphate + ADP + H(+). The protein operates within polyol metabolism; glycerol degradation via glycerol kinase pathway; sn-glycerol 3-phosphate from glycerol: step 1/1. With respect to regulation, inhibited by fructose 1,6-bisphosphate (FBP). Its function is as follows. Key enzyme in the regulation of glycerol uptake and metabolism. Catalyzes the phosphorylation of glycerol to yield sn-glycerol 3-phosphate. The sequence is that of Glycerol kinase from Nitrosomonas eutropha (strain DSM 101675 / C91 / Nm57).